The sequence spans 644 residues: Chaperone protein HscA (644 aa).

It belongs to the heat shock protein 70 family.

Its function is as follows. Chaperone involved in the maturation of iron-sulfur cluster-containing proteins. Has a low intrinsic ATPase activity which is markedly stimulated by HscB. Involved in the maturation of IscU. The chain is Chaperone protein HscA from Yersinia pseudotuberculosis serotype I (strain IP32953).